A 344-amino-acid chain; its full sequence is N-acetyl-gamma-glutamyl-phosphate reductase (344 aa).

Residue Cys-148 is part of the active site.

It belongs to the NAGSA dehydrogenase family. Type 1 subfamily.

The protein localises to the cytoplasm. It catalyses the reaction N-acetyl-L-glutamate 5-semialdehyde + phosphate + NADP(+) = N-acetyl-L-glutamyl 5-phosphate + NADPH + H(+). It functions in the pathway amino-acid biosynthesis; L-arginine biosynthesis; N(2)-acetyl-L-ornithine from L-glutamate: step 3/4. Functionally, catalyzes the NADPH-dependent reduction of N-acetyl-5-glutamyl phosphate to yield N-acetyl-L-glutamate 5-semialdehyde. The sequence is that of N-acetyl-gamma-glutamyl-phosphate reductase from Geobacillus kaustophilus (strain HTA426).